The sequence spans 92 residues: Acylphosphatase (92 aa).

The Acylphosphatase-like domain occupies 3 to 92 (TKHVLVSGIV…GPRSTHFEVT (90 aa)). Active-site residues include R18 and N36.

The protein belongs to the acylphosphatase family.

It carries out the reaction an acyl phosphate + H2O = a carboxylate + phosphate + H(+). The sequence is that of Acylphosphatase (acyP) from Alcanivorax borkumensis (strain ATCC 700651 / DSM 11573 / NCIMB 13689 / SK2).